The chain runs to 506 residues: MTDFVQLIGIEKHFGGIAALKSVDFTVKSGEVHALIGENGAGKSTLMGVLSGNVIPTAGTISVEGCVRRFSTPGDAIAAGIAMIHQELVLAPDLTVAENIFMNRMPRLIDWAKLRRDAAQILDRLGFEIDPGATIGDLPLAQRQIVEIAKALSLNARLIIFDEPTAVLGPSDARRLLNLIRSLRSEGVAIVYISHRLDEVADIADRVTVLNDGSLIATRAAKDVTIEEMVRLMVGRPISALFGEKRTSPFGAEIFRVESLTAGPLVQDLSFGVRAGEIVGLGGLIGSGRTETARAIFGADKRESGRIFIDGSQVKIRDPRDAVKAGIGLVPEDRRGQGVVIDASIRINTTMTSLRRFSPAGIIKRTFERRFVGEKIAALKVKSAGIDAPVQSLSGGNQQKVVIGKWVDVASKVIILDEPTRGVDVGAKSEIYAIIRRLADEGRAVLLISSDHQELFGLCDRVLVMGRGRIRSELLPGEFDEERLLSASLAIEPIQTTVRTDQNPAG.

2 ABC transporter domains span residues 5–237 and 249–492; these read VQLI…VGRP and PFGA…LAIE. Residue 37–44 coordinates ATP; sequence GENGAGKS.

It belongs to the ABC transporter superfamily. Ribose importer (TC 3.A.1.2.1) family. As to quaternary structure, the complex is composed of an ATP-binding protein (RbsA), two transmembrane proteins (RbsC) and a solute-binding protein (RbsB).

It is found in the cell inner membrane. The enzyme catalyses D-ribose(out) + ATP + H2O = D-ribose(in) + ADP + phosphate + H(+). Part of the ABC transporter complex RbsABC involved in ribose import. Responsible for energy coupling to the transport system. This chain is Ribose import ATP-binding protein RbsA, found in Chelativorans sp. (strain BNC1).